Reading from the N-terminus, the 180-residue chain is Large ribosomal subunit protein uL5 (180 aa).

This sequence belongs to the universal ribosomal protein uL5 family. As to quaternary structure, part of the 50S ribosomal subunit; part of the 5S rRNA/L5/L18/L25 subcomplex. Contacts the 5S rRNA and the P site tRNA. Forms a bridge to the 30S subunit in the 70S ribosome.

Its function is as follows. This is one of the proteins that bind and probably mediate the attachment of the 5S RNA into the large ribosomal subunit, where it forms part of the central protuberance. In the 70S ribosome it contacts protein S13 of the 30S subunit (bridge B1b), connecting the 2 subunits; this bridge is implicated in subunit movement. Contacts the P site tRNA; the 5S rRNA and some of its associated proteins might help stabilize positioning of ribosome-bound tRNAs. This is Large ribosomal subunit protein uL5 from Ralstonia nicotianae (strain ATCC BAA-1114 / GMI1000) (Ralstonia solanacearum).